The chain runs to 642 residues: Threonine--tRNA ligase (642 aa).

The TGS domain occupies 1–61; the sequence is MPVITLPDGS…ESDAQLAIIT (61 aa). A catalytic region spans residues 243–534; sequence DHRKIGKQLD…LTEEYAGFFP (292 aa). Zn(2+) contacts are provided by Cys334, His385, and His511.

This sequence belongs to the class-II aminoacyl-tRNA synthetase family. In terms of assembly, homodimer. It depends on Zn(2+) as a cofactor.

It is found in the cytoplasm. The enzyme catalyses tRNA(Thr) + L-threonine + ATP = L-threonyl-tRNA(Thr) + AMP + diphosphate + H(+). Its function is as follows. Catalyzes the attachment of threonine to tRNA(Thr) in a two-step reaction: L-threonine is first activated by ATP to form Thr-AMP and then transferred to the acceptor end of tRNA(Thr). Also edits incorrectly charged L-seryl-tRNA(Thr). This Yersinia enterocolitica serotype O:8 / biotype 1B (strain NCTC 13174 / 8081) protein is Threonine--tRNA ligase.